The chain runs to 617 residues: Secretogranin-2 (617 aa).

Positions 1–27 (MAEAKTHWLGAALSLIPLIFLISGAEA) are cleaved as a signal peptide. Residues 28–30 (ASF) constitute a propeptide that is removed on maturation. The interval 120–143 (QAENEPQSAPKENKPYALNSEKNF) is disordered. Position 151 is a sulfotyrosine (Y151). Residue S174 is modified to Phosphoserine. The tract at residues 182-200 (TNEIVEEQYTPQSLATLES) is O-glycosylated at one site. Composition is skewed to basic and acidic residues over residues 257–284 (IESQ…EMKR) and 293–302 (EDLRKESKDQ). Positions 257–302 (IESQTQEEVRDSKENIEKNEQINDEMKRSGQLGIQEEDLRKESKDQ) are disordered. The residue at position 268 (S268) is a Phosphoserine. Phosphoserine occurs at positions 432, 532, 555, and 556. Residues 552 to 583 (NQGSSQETDKLAPVSKRFPVGPPKNDDTPNRQ) are disordered.

This sequence belongs to the chromogranin/secretogranin protein family. As to quaternary structure, interacts with Secretogranin III/SCG3. Post-translationally, O-glycosylated.

The protein localises to the secreted. Its function is as follows. Neuroendocrine protein of the granin family that regulates the biogenesis of secretory granules. This Homo sapiens (Human) protein is Secretogranin-2 (SCG2).